A 336-amino-acid chain; its full sequence is ATP-dependent 6-phosphofructokinase 3 (336 aa).

Residues Gly-10, Arg-72–Glu-73, and Gly-108–Thr-111 contribute to the ATP site. Residue Asn-109 participates in Mg(2+) binding. Substrate is bound by residues Thr-131 to Asp-133, Arg-168, Met-175 to His-177, Glu-228, Arg-255, and Tyr-261 to Arg-264. Asp-133 functions as the Proton acceptor in the catalytic mechanism.

Belongs to the phosphofructokinase type A (PFKA) family. Mixed-substrate PFK group III subfamily. In terms of assembly, homodimer or homotetramer. It depends on Mg(2+) as a cofactor.

It localises to the cytoplasm. The enzyme catalyses beta-D-fructose 6-phosphate + ATP = beta-D-fructose 1,6-bisphosphate + ADP + H(+). It participates in carbohydrate degradation; glycolysis; D-glyceraldehyde 3-phosphate and glycerone phosphate from D-glucose: step 3/4. Catalyzes the phosphorylation of D-fructose 6-phosphate to fructose 1,6-bisphosphate by ATP, the first committing step of glycolysis. The polypeptide is ATP-dependent 6-phosphofructokinase 3 (Bacteroides thetaiotaomicron (strain ATCC 29148 / DSM 2079 / JCM 5827 / CCUG 10774 / NCTC 10582 / VPI-5482 / E50)).